The sequence spans 472 residues: 3-isopropylmalate dehydratase large subunit (472 aa).

Positions 353, 414, and 417 each coordinate [4Fe-4S] cluster.

It belongs to the aconitase/IPM isomerase family. LeuC type 1 subfamily. Heterodimer of LeuC and LeuD. [4Fe-4S] cluster is required as a cofactor.

The enzyme catalyses (2R,3S)-3-isopropylmalate = (2S)-2-isopropylmalate. Its pathway is amino-acid biosynthesis; L-leucine biosynthesis; L-leucine from 3-methyl-2-oxobutanoate: step 2/4. Its function is as follows. Catalyzes the isomerization between 2-isopropylmalate and 3-isopropylmalate, via the formation of 2-isopropylmaleate. This Acinetobacter baumannii (strain AB0057) protein is 3-isopropylmalate dehydratase large subunit.